Reading from the N-terminus, the 462-residue chain is Citrate synthase, mitochondrial (462 aa).

The transit peptide at 1–21 directs the protein to the mitochondrion; sequence MRSINQLLKQASLSQKSQYNF. Catalysis depends on residues H300, H346, and D401.

It belongs to the citrate synthase family. Homodimer.

Its subcellular location is the mitochondrion matrix. It is found in the cytoplasm. The protein resides in the cytoskeleton. It carries out the reaction oxaloacetate + acetyl-CoA + H2O = citrate + CoA + H(+). It participates in carbohydrate metabolism; tricarboxylic acid cycle; isocitrate from oxaloacetate: step 1/2. In terms of biological role, structural protein involved in oral morphogenesis and in pronuclear behavior during conjugation. Respiratory enzyme. This chain is Citrate synthase, mitochondrial, found in Tetrahymena thermophila.